Reading from the N-terminus, the 874-residue chain is Valine--tRNA ligase (874 aa).

A 'HIGH' region motif is present at residues 46 to 56 (PNVTGHLHIGH). Residues 523-527 (KMSKS) carry the 'KMSKS' region motif. Lys-526 is a binding site for ATP. Residues 805-874 (DYVFQMKKAS…TLTDLKQKVK (70 aa)) are a coiled coil.

It belongs to the class-I aminoacyl-tRNA synthetase family. ValS type 1 subfamily. Monomer.

Its subcellular location is the cytoplasm. The enzyme catalyses tRNA(Val) + L-valine + ATP = L-valyl-tRNA(Val) + AMP + diphosphate. Its function is as follows. Catalyzes the attachment of valine to tRNA(Val). As ValRS can inadvertently accommodate and process structurally similar amino acids such as threonine, to avoid such errors, it has a 'posttransfer' editing activity that hydrolyzes mischarged Thr-tRNA(Val) in a tRNA-dependent manner. The polypeptide is Valine--tRNA ligase (Ureaplasma parvum serovar 3 (strain ATCC 700970)).